The following is a 313-amino-acid chain: Dimethyladenosine transferase (313 aa).

The segment at 1–22 (MPKIKSAASGRRRERQQQRGQL) is disordered. S-adenosyl-L-methionine is bound by residues His-37, Leu-39, Gly-64, Glu-85, Asp-113, and Asn-128.

This sequence belongs to the class I-like SAM-binding methyltransferase superfamily. rRNA adenine N(6)-methyltransferase family. As to quaternary structure, part of the small subunit (SSU) processome, composed of more than 70 proteins and the RNA chaperone small nucleolar RNA (snoRNA) U3.

The protein localises to the nucleus. Its subcellular location is the nucleoplasm. It localises to the nucleolus. The catalysed reaction is adenosine(1779)/adenosine(1780) in 18S rRNA + 4 S-adenosyl-L-methionine = N(6)-dimethyladenosine(1779)/N(6)-dimethyladenosine(1780) in 18S rRNA + 4 S-adenosyl-L-homocysteine + 4 H(+). In terms of biological role, specifically dimethylates two adjacent adenosines in the loop of a conserved hairpin near the 3'-end of 18S rRNA in the 40S particle. Involved in the pre-rRNA processing steps leading to small-subunit rRNA production independently of its RNA-modifying catalytic activity. Part of the small subunit (SSU) processome, first precursor of the small eukaryotic ribosomal subunit. During the assembly of the SSU processome in the nucleolus, many ribosome biogenesis factors, an RNA chaperone and ribosomal proteins associate with the nascent pre-rRNA and work in concert to generate RNA folding, modifications, rearrangements and cleavage as well as targeted degradation of pre-ribosomal RNA by the RNA exosome. The protein is Dimethyladenosine transferase (DIMT1) of Bos taurus (Bovine).